Reading from the N-terminus, the 300-residue chain is tRNA uridine(34) hydroxylase (300 aa).

A Rhodanese domain is found at 128–222 (ADPEVIVVDT…YLEDVPQAQS (95 aa)). Cysteine 182 functions as the Cysteine persulfide intermediate in the catalytic mechanism.

It belongs to the TrhO family.

The enzyme catalyses uridine(34) in tRNA + AH2 + O2 = 5-hydroxyuridine(34) in tRNA + A + H2O. Catalyzes oxygen-dependent 5-hydroxyuridine (ho5U) modification at position 34 in tRNAs. In Deinococcus radiodurans (strain ATCC 13939 / DSM 20539 / JCM 16871 / CCUG 27074 / LMG 4051 / NBRC 15346 / NCIMB 9279 / VKM B-1422 / R1), this protein is tRNA uridine(34) hydroxylase.